We begin with the raw amino-acid sequence, 399 residues long: Elongation factor Tu (399 aa).

Residues 10–204 (KPHVNIGTIG…AVDASIPEPE (195 aa)) form the tr-type G domain. A G1 region spans residues 19 to 26 (GHVDHGKT). 19 to 26 (GHVDHGKT) contributes to the GTP binding site. A Mg(2+)-binding site is contributed by Thr26. Positions 60-64 (GITIN) are G2. The segment at 81–84 (DCPG) is G3. Residues 81-85 (DCPGH) and 136-139 (NKCD) contribute to the GTP site. The interval 136–139 (NKCD) is G4. The segment at 174 to 176 (SGL) is G5.

Belongs to the TRAFAC class translation factor GTPase superfamily. Classic translation factor GTPase family. EF-Tu/EF-1A subfamily. Monomer.

Its subcellular location is the cytoplasm. The enzyme catalyses GTP + H2O = GDP + phosphate + H(+). Its function is as follows. GTP hydrolase that promotes the GTP-dependent binding of aminoacyl-tRNA to the A-site of ribosomes during protein biosynthesis. This Prochlorococcus marinus (strain MIT 9215) protein is Elongation factor Tu.